Consider the following 199-residue polypeptide: uncharacterized protein (199 aa).

Residues 71 to 104 (RANATNKLTVIAEQIQHLQEQARKVLEDARRDAD) are a coiled coil.

This is an uncharacterized protein from Mus musculus (Mouse).